Reading from the N-terminus, the 192-residue chain is UPF0312 protein PFLU_5725 (192 aa).

Residues 1–23 (MLKKTLAALAIGTALLSAGQVMA) form the signal peptide.

It belongs to the UPF0312 family. Type 1 subfamily.

The protein resides in the periplasm. This is UPF0312 protein PFLU_5725 from Pseudomonas fluorescens (strain SBW25).